Here is a 787-residue protein sequence, read N- to C-terminus: Endonuclease MutS2 (787 aa).

336 to 343 (GPNTGGKT) contributes to the ATP binding site. A Smr domain is found at 712-787 (LDLRGVRYED…GNGATEVQFK (76 aa)).

The protein belongs to the DNA mismatch repair MutS family. MutS2 subfamily. In terms of assembly, homodimer. Binds to stalled ribosomes, contacting rRNA.

Functionally, endonuclease that is involved in the suppression of homologous recombination and thus may have a key role in the control of bacterial genetic diversity. Acts as a ribosome collision sensor, splitting the ribosome into its 2 subunits. Detects stalled/collided 70S ribosomes which it binds and splits by an ATP-hydrolysis driven conformational change. Acts upstream of the ribosome quality control system (RQC), a ribosome-associated complex that mediates the extraction of incompletely synthesized nascent chains from stalled ribosomes and their subsequent degradation. Probably generates substrates for RQC. This chain is Endonuclease MutS2, found in Lactiplantibacillus plantarum (strain ATCC BAA-793 / NCIMB 8826 / WCFS1) (Lactobacillus plantarum).